The sequence spans 420 residues: MTKWKRANPNGTRDYLFEECTLIEEVEQKLRRTFLERGYEEIRTPTIEFYDVFAFQSRPIDEEKMYKFFDEKGRIIVLRPDMTIPLARVVGTQRCDTPLKVTYSGNVFRANESLAGKYNEIVQSGIEVIGIDNVRAEIECVISVIQSLQKLKVQSFTIEIGQVQLYKCIVKKLSIHEEEEKVLRTYIESKNYASLSNFIRDKKLDRCDETVKLLEKLPRLFGNLEVIEEAEKLASSNEMKMAITRVKEIYEAIEKLGYGSYISIDLGMIQHLDYYTGVIFKGYIYEIGEEIVSGGRYDELIGNFGEMLPAVGLAVQVNQIVKALQEQQEPYERKRIDIMIHYELNRLAEAERLRNLLQKDGKKVALSLFSNLNDTFQFARKNQIVTVVEAKSESLVEYVWKEKWVVQKEGETSCVTFKLR.

The protein belongs to the class-II aminoacyl-tRNA synthetase family. HisZ subfamily. As to quaternary structure, heteromultimer composed of HisG and HisZ subunits.

It is found in the cytoplasm. It functions in the pathway amino-acid biosynthesis; L-histidine biosynthesis; L-histidine from 5-phospho-alpha-D-ribose 1-diphosphate: step 1/9. In terms of biological role, required for the first step of histidine biosynthesis. May allow the feedback regulation of ATP phosphoribosyltransferase activity by histidine. This is ATP phosphoribosyltransferase regulatory subunit from Bacillus thuringiensis (strain Al Hakam).